The following is a 543-amino-acid chain: Probable zinc transporter protein DDB_G0283629 (543 aa).

The tract at residues 1–175 (MENFKNNELE…EESKPLNQLR (175 aa)) is disordered. Topologically, residues 1–186 (MENFKNNELE…LDSKKKARYS (186 aa)) are cytoplasmic. Low complexity-rich tracts occupy residues 11–26 (SSPI…SINN) and 41–55 (NNNN…NSHI). Composition is skewed to basic and acidic residues over residues 56–66 (NNHDHKHNHEH) and 76–104 (HNHD…EHNV). Over residues 105 to 116 (GNKNLLTNNNNQ) the composition is skewed to low complexity. Gly residues predominate over residues 130–140 (EDGSSSGGGGG). A helical transmembrane segment spans residues 187-207 (LILALTLTTIFMVGEIVGGYF). Residues 208-216 (ANSLAIMTD) lie on the Extracellular side of the membrane. Residues 217-237 (AAHLLTDIGAMFLSLFAMWIS) traverse the membrane as a helical segment. Residues 238 to 251 (QHPPTSSMSFGFHR) lie on the Cytoplasmic side of the membrane. A helical membrane pass occupies residues 252-272 (AEILGALVSVLMIWALTGVLV). At 273–289 (YEAIQRILYPPDAVDGK) the chain is on the extracellular side. A helical membrane pass occupies residues 290–310 (IMFIIASCGLFINIIDAIILH). Topologically, residues 311 to 375 (WGSGGHGHSH…VRNINVHSAY (65 aa)) are cytoplasmic. The interval 319–342 (SHGGGHGHSHGIGGGTQKKKSKKN) is disordered. A helical membrane pass occupies residues 376 to 396 (IHVLGDCFQSIGVMVASCIIW). Topologically, residues 397-402 (VHPHWK) are extracellular. A helical membrane pass occupies residues 403-423 (IADPITTLIFSVIVLGTTIKL). Residues 424–543 (LRESLGVLME…NDNLSSPPNQ (120 aa)) are Cytoplasmic-facing. The segment at 516–543 (KCKDHSCPPPKPKKKKIKNDNLSSPPNQ) is disordered.

It belongs to the cation diffusion facilitator (CDF) transporter (TC 2.A.4) family. SLC30A subfamily.

The protein localises to the membrane. Functionally, may be involved in zinc transport from the cytoplasm to either intracellular organelles or extracellular spaces. This chain is Probable zinc transporter protein DDB_G0283629, found in Dictyostelium discoideum (Social amoeba).